The following is an 83-amino-acid chain: Cell division topological specificity factor (83 aa).

Belongs to the MinE family.

Functionally, prevents the cell division inhibition by proteins MinC and MinD at internal division sites while permitting inhibition at polar sites. This ensures cell division at the proper site by restricting the formation of a division septum at the midpoint of the long axis of the cell. The polypeptide is Cell division topological specificity factor (Pseudoalteromonas atlantica (strain T6c / ATCC BAA-1087)).